A 159-amino-acid chain; its full sequence is NAD(P)H-quinone oxidoreductase subunit J, chloroplastic (159 aa).

This sequence belongs to the complex I 30 kDa subunit family. In terms of assembly, NDH is composed of at least 16 different subunits, 5 of which are encoded in the nucleus.

It is found in the plastid. The protein localises to the chloroplast thylakoid membrane. It catalyses the reaction a plastoquinone + NADH + (n+1) H(+)(in) = a plastoquinol + NAD(+) + n H(+)(out). The catalysed reaction is a plastoquinone + NADPH + (n+1) H(+)(in) = a plastoquinol + NADP(+) + n H(+)(out). In terms of biological role, NDH shuttles electrons from NAD(P)H:plastoquinone, via FMN and iron-sulfur (Fe-S) centers, to quinones in the photosynthetic chain and possibly in a chloroplast respiratory chain. The immediate electron acceptor for the enzyme in this species is believed to be plastoquinone. Couples the redox reaction to proton translocation, and thus conserves the redox energy in a proton gradient. In Populus trichocarpa (Western balsam poplar), this protein is NAD(P)H-quinone oxidoreductase subunit J, chloroplastic.